A 95-amino-acid chain; its full sequence is Opiscorpine-2 (95 aa).

The signal sequence occupies residues 1 to 19; that stretch reads MNNKLTALIFHGLLAIASC. The BetaSPN-type CS-alpha/beta domain occupies 55 to 95; that stretch reads EFMCMANMDPTGSCETHCQKASGEKGYCHGTKCKCGVPLSY. 3 disulfides stabilise this stretch: C58–C82, C68–C87, and C72–C89.

It belongs to the long chain scorpion toxin family. Class 3 subfamily. Expressed by the venom gland.

It is found in the secreted. Its function is as follows. Has antimicrobial activity against yeasts and bacteria. The protein is Opiscorpine-2 of Opistophthalmus carinatus (African yellow leg scorpion).